Reading from the N-terminus, the 21-residue chain is Venom peptide Tv1 (21 aa).

Cystine bridges form between C4/C20, C5/C21, and C7/C16.

As to expression, expressed by the salivary gland. This peptide is considered as a venom peptide.

Its subcellular location is the secreted. In terms of biological role, injections of 20 uM of this synthetic peptide (Ile) causes partial paralysis to polychaete worms (Nereis virens), the natural prey of terebrid snails. This paralysis may be due to an inhibition of nicotinic receptors at the neuromuscular junction. The protein is Venom peptide Tv1 of Terebra variegata (Variegate auger snail).